The following is a 1368-amino-acid chain: Indole-3-acetaldehyde oxidase (1368 aa).

Positions 19–108 (TSLVFAINGQ…GCSITTSDGL (90 aa)) constitute a 2Fe-2S ferredoxin-type domain. [2Fe-2S] cluster contacts are provided by Cys-60, Cys-65, and Cys-68. Residues 246–427 (LHSRKYRWSS…LSLEIPSWHS (182 aa)) form the FAD-binding PCMH-type domain.

This sequence belongs to the xanthine dehydrogenase family. Aldehyde oxidases (AO) are homodimers and heterodimers of AO subunits. AO-alpha is an AAO1 homodimer; AO-beta is an AAO1-AAO2 heterodimer. It depends on [2Fe-2S] cluster as a cofactor. The cofactor is FAD. Mo-molybdopterin serves as cofactor. Predominantly expressed in roots, seedlings, mature siliques and seeds, and to lower extent in stems and rosettes. In seedlings, mostly expressed in lower part of hypocotyls and roots.

It is found in the cytoplasm. It carries out the reaction indole-3-acetaldehyde + O2 + H2O = (indol-3-yl)acetate + H2O2 + H(+). Strongly inhibited by iodoacetate and potassium cyanide (KCN). Weakly inhibited by 2-mercaptoethanol, dithiothreitol (DTT), menadione, estradiol, 4'-(9-acridinylamino)methanesulfon-m-anisidine (mAMSA), allopurinol and tritonX-100. Not affected by p-chloromercuribenzoate. In higher plants aldehyde oxidases (AO) appear to be homo- and heterodimeric assemblies of AO subunits with probably different physiological functions. AO-alpha may be involved in the biosynthesis of auxin, and in biosynthesis of abscisic acid (ABA) in seeds. In vitro, AO-alpha uses heptaldehyde, protocatechualdehyde, benzaldehyde, indole-3-aldehyde (IAld), indole-3-acetaldehyde (IAAld), cinnamaldehyde and citral as substrates; AO-beta uses IAAld, IAld and naphtaldehyde as substrates. The polypeptide is Indole-3-acetaldehyde oxidase (AAO1) (Arabidopsis thaliana (Mouse-ear cress)).